Reading from the N-terminus, the 108-residue chain is Peptidyl-prolyl cis-trans isomerase FKBP1A (108 aa).

Residues 20-108 (GQTVVVHYVG…TFDVELLRLE (89 aa)) enclose the PPIase FKBP-type domain.

This sequence belongs to the FKBP-type PPIase family. FKBP1 subfamily.

It localises to the cytoplasm. The catalysed reaction is [protein]-peptidylproline (omega=180) = [protein]-peptidylproline (omega=0). Its activity is regulated as follows. Inhibited by both FK506 and rapamycin. Keeps in an inactive conformation TGFBR1, the TGF-beta type I serine/threonine kinase receptor, preventing TGF-beta receptor activation in absence of ligand. May modulate the RYR1 calcium channel activity. PPIases accelerate the folding of proteins. It catalyzes the cis-trans isomerization of proline imidic peptide bonds in oligopeptides. This is Peptidyl-prolyl cis-trans isomerase FKBP1A (fkbp1a) from Xenopus laevis (African clawed frog).